A 146-amino-acid polypeptide reads, in one-letter code: Deoxyuridine 5'-triphosphate nucleotidohydrolase (146 aa).

Residues 65 to 67 (RSG), asparagine 78, 82 to 84 (LID), and methionine 92 each bind substrate.

It belongs to the dUTPase family. The cofactor is Mg(2+).

The catalysed reaction is dUTP + H2O = dUMP + diphosphate + H(+). Its pathway is pyrimidine metabolism; dUMP biosynthesis; dUMP from dCTP (dUTP route): step 2/2. In terms of biological role, this enzyme is involved in nucleotide metabolism: it produces dUMP, the immediate precursor of thymidine nucleotides and it decreases the intracellular concentration of dUTP so that uracil cannot be incorporated into DNA. This chain is Deoxyuridine 5'-triphosphate nucleotidohydrolase, found in Thiobacillus denitrificans (strain ATCC 25259 / T1).